Reading from the N-terminus, the 431-residue chain is Glutamate-1-semialdehyde 2,1-aminomutase (431 aa).

Position 269 is an N6-(pyridoxal phosphate)lysine (K269).

It belongs to the class-III pyridoxal-phosphate-dependent aminotransferase family. HemL subfamily. In terms of assembly, homodimer. Requires pyridoxal 5'-phosphate as cofactor.

The protein localises to the cytoplasm. It catalyses the reaction (S)-4-amino-5-oxopentanoate = 5-aminolevulinate. It functions in the pathway porphyrin-containing compound metabolism; protoporphyrin-IX biosynthesis; 5-aminolevulinate from L-glutamyl-tRNA(Glu): step 2/2. The protein operates within porphyrin-containing compound metabolism; chlorophyll biosynthesis. This chain is Glutamate-1-semialdehyde 2,1-aminomutase, found in Chlorobaculum tepidum (strain ATCC 49652 / DSM 12025 / NBRC 103806 / TLS) (Chlorobium tepidum).